The following is a 74-amino-acid chain: Translation initiation factor IF-1 (74 aa).

The region spanning Met-1–Lys-73 is the S1-like domain.

Belongs to the IF-1 family. As to quaternary structure, component of the 30S ribosomal translation pre-initiation complex which assembles on the 30S ribosome in the order IF-2 and IF-3, IF-1 and N-formylmethionyl-tRNA(fMet); mRNA recruitment can occur at any time during PIC assembly.

The protein localises to the cytoplasm. Its function is as follows. One of the essential components for the initiation of protein synthesis. Stabilizes the binding of IF-2 and IF-3 on the 30S subunit to which N-formylmethionyl-tRNA(fMet) subsequently binds. Helps modulate mRNA selection, yielding the 30S pre-initiation complex (PIC). Upon addition of the 50S ribosomal subunit IF-1, IF-2 and IF-3 are released leaving the mature 70S translation initiation complex. In Psychrobacter sp. (strain PRwf-1), this protein is Translation initiation factor IF-1.